Here is a 1044-residue protein sequence, read N- to C-terminus: Diacylglycerol lipase-alpha (1044 aa).

Over 1-22 the chain is Cytoplasmic; it reads MPGIVVFRRRWSVGSDDLVLPA. The helical transmembrane segment at 23 to 43 threads the bilayer; sequence IFLFLLHTTWFVILSVVLFGL. At 44-60 the chain is on the extracellular side; the sequence is VYNPHEACSLNLVDHGR. A helical membrane pass occupies residues 61–81; that stretch reads GYLGILLSCMIAEMAIIWLSM. Topologically, residues 82-101 are cytoplasmic; it reads RGGILYTEPRDSMQYVLYVR. The chain crosses the membrane as a helical span at residues 102 to 122; it reads LAILVIEFIYAIVGIVWLTQY. Residues 123–136 are Extracellular-facing; it reads YTSCNDLTAKNVTL. Asn133 is a glycosylation site (N-linked (GlcNAc...) asparagine). The helical transmembrane segment at 137-157 threads the bilayer; that stretch reads GMVVCNWVVILSVCITVLCVF. Topologically, residues 158 to 1044 are cytoplasmic; sequence DPTGRTFVKL…KQDDLVISAR (887 aa). Residues Ser472 and Asp524 each act as charge relay system in the active site. 11 positions are modified to phosphoserine: Ser728, Ser730, Ser733, Ser744, Ser784, Ser786, Ser808, Ser810, Ser835, Ser849, and Ser954. Residues 848-905 are disordered; sequence LSKHSQDTQPLEAALGSGGVTPERPPSAANDEEEAAGGSEGGGVAPRGELALHNGRLG. Positions 1013–1044 are disordered; it reads QECLATDKIRTSTPTGHGASPTKQDDLVISAR. Thr1025 is subject to Phosphothreonine.

Belongs to the AB hydrolase superfamily. Lipase family. As to quaternary structure, interacts (via C-terminal) with CAMK2A; leading to the phosphorylation and inhibition of DAGLA enzymatic activity. Interacts (via PPXXF motif) with HOMER1 and HOMER2; this interaction is required for DAGLA membrane localization. It depends on Ca(2+) as a cofactor. Post-translationally, phosphorylated at Ser-784 and Ser-810 by CAMK2A; phosphorylation by CAMK2A inhibits diacylglycerol lipase activity.

It is found in the cell membrane. The protein resides in the cell projection. It localises to the dendritic spine membrane. Its subcellular location is the postsynaptic density membrane. The protein localises to the early endosome membrane. The catalysed reaction is a 1,2-diacyl-sn-glycerol + H2O = a 2-acylglycerol + a fatty acid + H(+). The enzyme catalyses 1-octadecanoyl-2-(5Z,8Z,11Z,14Z-eicosatetraenoyl)-sn-glycerol + H2O = 2-(5Z,8Z,11Z,14Z-eicosatetraenoyl)-glycerol + octadecanoate + H(+). It catalyses the reaction 1,2-di-(9Z-octadecenoyl)-sn-glycerol + H2O = 2-(9Z-octadecenoyl)-glycerol + (9Z)-octadecenoate + H(+). It carries out the reaction 1-(9Z-octadecenoyl)-2-(5Z,8Z,11Z,14Z-eicosatetraenoyl)-sn-glycerol + H2O = 2-(5Z,8Z,11Z,14Z-eicosatetraenoyl)-glycerol + (9Z)-octadecenoate + H(+). The catalysed reaction is 1-(9Z-octadecenoyl)-2-octadecanoyl-sn-glycerol + H2O = 2-octadecanoylglycerol + (9Z)-octadecenoate + H(+). The enzyme catalyses 1-(9Z-octadecenoyl)-2-(9Z,12Z-octadecadienoyl)-sn-glycerol + H2O = 2-(9Z,12Z-octadecadienoyl)-glycerol + (9Z)-octadecenoate + H(+). It catalyses the reaction 1-(9Z-octadecenoyl)-2-O-(5Z,8Z,11Z,14Z-eicosatetraenyl)-sn-glycerol + H2O = 2-O-(5Z,8Z,11Z,14Z)-eicosatetraenylglycerol + (9Z)-octadecenoate + H(+). Its activity is regulated as follows. Inhibited by 1,2,3-triazole urea covalent inhibitors KT172, DH376 and DO34. Inhibited by p-hydroxy-mercuri-benzoate and HgCl(2), but not to PMSF. Also inhibited by RHC80267. Diacylglycerol lipase activity is inhibited by the phosphorylation of Ser-784 and Ser-810 by CAMK2A. Serine hydrolase that hydrolyzes arachidonic acid-esterified diacylglycerols (DAGs) to produce the principal endocannabinoid, 2-arachidonoylglycerol (2-AG). Preferentially hydrolyzes sn-1 fatty acids from diacylglycerols (DAG) that contain arachidonic acid (AA) esterified at the sn-2 position to biosynthesize 2-AG. Has negligible activity against other lipids including monoacylglycerols and phospholipids. Plays a key role in regulating 2-AG signaling in the CNS. Controls the activity of 2-AG as a retrograde messenger at neuronal synapses. Supports axonal growth during development and adult neurogenesis. Plays a role for eCB signaling in the physiological regulation of anxiety and depressive behaviors. Also regulates neuroinflammatory responses in the brain, in particular, LPS-induced microglial activation. In Rattus norvegicus (Rat), this protein is Diacylglycerol lipase-alpha (Dagla).